Consider the following 203-residue polypeptide: Imidazoleglycerol-phosphate dehydratase (203 aa).

Belongs to the imidazoleglycerol-phosphate dehydratase family.

It localises to the cytoplasm. It carries out the reaction D-erythro-1-(imidazol-4-yl)glycerol 3-phosphate = 3-(imidazol-4-yl)-2-oxopropyl phosphate + H2O. The protein operates within amino-acid biosynthesis; L-histidine biosynthesis; L-histidine from 5-phospho-alpha-D-ribose 1-diphosphate: step 6/9. The sequence is that of Imidazoleglycerol-phosphate dehydratase from Salinispora arenicola (strain CNS-205).